A 185-amino-acid polypeptide reads, in one-letter code: Iodate reductase subunit IdrB (185 aa).

A signal peptide (tat-type signal) is located at residues 1–46; the sequence is MTTHPIHLHHDDPAHGGERACMSRRSFLLAGGAMVTLASLPGTAVA. Residues 69-168 enclose the Rieske domain; it reads GEPLEFAYPY…LEVRGDDIYA (100 aa). [2Fe-2S] cluster is bound by residues Cys109, His111, Cys130, and His133.

This sequence belongs to the AOX family. The iodate reductase (Idr) complex is composed of a molybdopterin-dependent iodate reductase (IdrA and IdrB subunits) and two associated peroxidases (IdrP1 and IdrP2). The cofactor is [2Fe-2S] cluster. In terms of processing, predicted to be exported by the Tat system. The position of the signal peptide cleavage has not been experimentally proven.

Its subcellular location is the periplasm. In terms of biological role, involved in iodate respiration. May accept electrons from cytochrome c551, and catalyze the reduction of iodate (IO(3)(-)) to produce the chemically unstable intermediate hypoiodous acid (HIO). This intermediate then undergoes abiotic disproportionation to yield two molecules of iodide (I(-)) and one molecule of iodate. The resultant iodate subsequently cycles back into the reductive pathway. The initial reduction of iodate may inadvertently produce low levels of incidental toxic H(2)O(2), which is detoxified by IdrP1 and IdrP2. This chain is Iodate reductase subunit IdrB, found in Denitromonas iodatirespirans.